A 349-amino-acid polypeptide reads, in one-letter code: Small ribosomal subunit protein eS6 (349 aa).

Positions 224–349 (RRRSRLSSMR…AKKEKKQKKK (126 aa)) are disordered. 2 stretches are compositionally biased toward basic and acidic residues: residues 231–251 (SMRD…EKAA) and 260–334 (KKEA…EAAK).

This sequence belongs to the eukaryotic ribosomal protein eS6 family. As to quaternary structure, component of the small ribosomal subunit. Part of the small subunit (SSU) processome, composed of more than 70 proteins and the RNA chaperone small nucleolar RNA (snoRNA) U3. In terms of processing, ribosomal protein S6 is the major substrate of protein kinases in eukaryote ribosomes.

It localises to the cytoplasm. It is found in the nucleus. Its subcellular location is the nucleolus. Its function is as follows. Component of the 40S small ribosomal subunit. Plays an important role in controlling cell growth and proliferation through the selective translation of particular classes of mRNA. Part of the small subunit (SSU) processome, first precursor of the small eukaryotic ribosomal subunit. During the assembly of the SSU processome in the nucleolus, many ribosome biogenesis factors, an RNA chaperone and ribosomal proteins associate with the nascent pre-rRNA and work in concert to generate RNA folding, modifications, rearrangements and cleavage as well as targeted degradation of pre-ribosomal RNA by the RNA exosome. The chain is Small ribosomal subunit protein eS6 (RpS6) from Aedes albopictus (Asian tiger mosquito).